The following is a 2541-amino-acid chain: Highly reducing polyketide synthase otaA (2541 aa).

The region spanning 9–431 (SEPLAIIGLA…GTNAHVVLED (423 aa)) is the Ketosynthase family 3 (KS3) domain. Residues C182, H317, and H355 each act as for beta-ketoacyl synthase activity in the active site. The 318-residue stretch at 571–888 (FIFTGQGANW…GSLLKRYETD (318 aa)) folds into the Malonyl-CoA:ACP transacylase (MAT) domain. Positions 957 to 1092 (HELLGVPVED…GSVRVETGPH (136 aa)) are N-terminal hotdog fold. Residues 957–1251 (HELLGVPVED…GLDLVQLPPS (295 aa)) form a dehydratase (DH) domain region. One can recognise a PKS/mFAS DH domain in the interval 957–1254 (HELLGVPVED…LVQLPPSEDA (298 aa)). The interval 1108 to 1254 (TESVDIAQMY…LVQLPPSEDA (147 aa)) is C-terminal hotdog fold. I1420 and E1442 together coordinate S-adenosyl-L-methionine. A methyltransferase (CMeT) domain region spans residues 1433–1605 (HAQTGIKVLE…DQELRNAGLQ (173 aa)). An Enoyl reductase (ER) domain is found at 1838-2141 (HQPNGFHFVE…RQGNAGPWVL (304 aa)). Residues 2165–2344 (ASYLLIGGFG…PATSISLGSV (180 aa)) enclose the Ketoreductase (KR) domain. Residues 2453–2530 (DAVELVTRAI…QLAQQAAGGS (78 aa)) enclose the Carrier domain. At S2490 the chain carries O-(pantetheine 4'-phosphoryl)serine.

Requires pantetheine 4'-phosphate as cofactor.

It carries out the reaction 4 malonyl-CoA + acetyl-CoA + 5 NADPH + 9 H(+) = 7-methylmellein + 3 CO2 + 5 NADP(+) + 5 CoA + 4 H2O. It functions in the pathway mycotoxin biosynthesis. In terms of biological role, highly reducing polyketide synthase; part of the gene cluster that mediates the biosynthesis of ochratoxin A (OTA), a mycotoxin composed of a chlorinated type I polyketide dihydroisocoumarin moiety linked to L-phenylalanine, and demonstrated to have nephrotoxic, immunotoxic, genotoxic, neurotoxic, and teratogenic properties. OtaA catalyzes the condensation of one acetate and 4 malonate units to form the isocoumarin group. The pathway begins with the highly reducing polyketide synthase otaA that catalyzes the formation of the isocoumarin group during the initial stages of biosynthesis, starting from one acetate and 4 malonate units, to originate the characteristic pentaketide skeleton 7-methylmellein (7-MM) of the OTA molecule. The newly identified cyclase otaY might be involved in the polyketide cyclization reaction during the initial steps of the OTA biosynthesis. 7-MM is then oxidized into 7-carboxymellein (also called ochratoxin beta) by the cytochrome P450 monooxygenase otaC. The NRPS encoded by the otaB gene is involved in the linking of phenylalanine to the dihydroisocoumarin ring. The reaction catalyzed by NRPS results in the production of ochratoxin B (OTB), which is the non-chlorinated analog of OTA and which subsequently serves as the substrate of the halogenase otaD for chlorination activity to form the final molecular structure of OTA, containing a chlorine atom in the C-5 position of the molecule. The protein is Highly reducing polyketide synthase otaA of Aspergillus carbonarius (strain ITEM 5010).